We begin with the raw amino-acid sequence, 78 residues long: UPF0335 protein A1C_00850 (78 aa).

This sequence belongs to the UPF0335 family.

This is UPF0335 protein A1C_00850 from Rickettsia akari (strain Hartford).